The primary structure comprises 297 residues: Myozenin-1 (297 aa).

The segment at 1 to 34 (MPLSGTPAPNKKRKSSKLIMELTGGGQESSGLNL) is disordered. The residue at position 82 (serine 82) is a Phosphoserine. The tract at residues 105 to 172 (FSYSKSSGGG…ALPDNQAGGE (68 aa)) is disordered. The span at 118 to 128 (RSGSAGQYGSD) shows a compositional bias: low complexity. The segment covering 136–162 (SGSGSGSGSGPGSGGAGGPGGHSGRGG) has biased composition (gly residues).

It belongs to the myozenin family. In terms of assembly, interacts with ACTN2, ACTN3, FLNA, FLNB, FLNC, LDB3, PPP3CA and TCAP. Interacts via its C-terminal region with MYOT.

Its subcellular location is the nucleus. It localises to the cell projection. It is found in the pseudopodium. Myozenins may serve as intracellular binding proteins involved in linking Z-disk proteins such as alpha-actinin, gamma-filamin, TCAP/telethonin, LDB3/ZASP and localizing calcineurin signaling to the sarcomere. Plays an important role in the modulation of calcineurin signaling. May play a role in myofibrillogenesis. This Bos taurus (Bovine) protein is Myozenin-1 (MYOZ1).